A 79-amino-acid chain; its full sequence is Acyl carrier protein (79 aa).

A Carrier domain is found at 6–79 (KEILDGLAEI…VQDVINYIQK (74 aa)). An O-(pantetheine 4'-phosphoryl)serine modification is found at Ser-41.

The protein belongs to the acyl carrier protein (ACP) family. Post-translationally, 4'-phosphopantetheine is transferred from CoA to a specific serine of apo-ACP by AcpS. This modification is essential for activity because fatty acids are bound in thioester linkage to the sulfhydryl of the prosthetic group.

The protein localises to the cytoplasm. It participates in lipid metabolism; fatty acid biosynthesis. Its function is as follows. Carrier of the growing fatty acid chain in fatty acid biosynthesis. The polypeptide is Acyl carrier protein (Thermobifida fusca (strain YX)).